We begin with the raw amino-acid sequence, 302 residues long: tRNA pseudouridine synthase B (302 aa).

Asp45 acts as the Nucleophile in catalysis.

The protein belongs to the pseudouridine synthase TruB family. Type 1 subfamily.

The catalysed reaction is uridine(55) in tRNA = pseudouridine(55) in tRNA. Responsible for synthesis of pseudouridine from uracil-55 in the psi GC loop of transfer RNAs. The sequence is that of tRNA pseudouridine synthase B from Francisella philomiragia subsp. philomiragia (strain ATCC 25017 / CCUG 19701 / FSC 153 / O#319-036).